Reading from the N-terminus, the 206-residue chain is Large ribosomal subunit protein uL22m (206 aa).

The N-terminal 40 residues, 1–40 (MAAALLRELGALWVPNLRIWTTQMLRVLPQSCIHTSTSLD), are a transit peptide targeting the mitochondrion.

This sequence belongs to the universal ribosomal protein uL22 family. In terms of assembly, component of the mitochondrial ribosome large subunit (39S) which comprises a 16S rRNA and about 50 distinct proteins.

It is found in the mitochondrion. The sequence is that of Large ribosomal subunit protein uL22m (Mrpl22) from Rattus norvegicus (Rat).